Consider the following 595-residue polypeptide: Elongation factor 4 (595 aa).

The 183-residue stretch at 2–184 (SHIRNFSIIA…RLVATIPAPT (183 aa)) folds into the tr-type G domain. Residues 14–19 (DHGKST) and 131–134 (NKMD) each bind GTP.

It belongs to the TRAFAC class translation factor GTPase superfamily. Classic translation factor GTPase family. LepA subfamily.

Its subcellular location is the cell inner membrane. The enzyme catalyses GTP + H2O = GDP + phosphate + H(+). Functionally, required for accurate and efficient protein synthesis under certain stress conditions. May act as a fidelity factor of the translation reaction, by catalyzing a one-codon backward translocation of tRNAs on improperly translocated ribosomes. Back-translocation proceeds from a post-translocation (POST) complex to a pre-translocation (PRE) complex, thus giving elongation factor G a second chance to translocate the tRNAs correctly. Binds to ribosomes in a GTP-dependent manner. This chain is Elongation factor 4, found in Pseudomonas savastanoi pv. phaseolicola (strain 1448A / Race 6) (Pseudomonas syringae pv. phaseolicola (strain 1448A / Race 6)).